The sequence spans 213 residues: Dimethylamine corrinoid protein 1 (213 aa).

In terms of domain architecture, B12-binding N-terminal spans 1-90 (MSKEELLQEL…LMPEGSASSK (90 aa)). The B12-binding domain maps to 91 to 213 (MGVIVNGTVE…AVAKAKELLA (123 aa)). Residue His-104 coordinates methylcob(III)alamin.

Belongs to the methylamine corrinoid protein family.

Its pathway is one-carbon metabolism; methanogenesis from dimethylamine. Its function is as follows. Acts as a methyl group carrier between MtbB and MtbA. The chain is Dimethylamine corrinoid protein 1 (mtbC1) from Methanosarcina acetivorans (strain ATCC 35395 / DSM 2834 / JCM 12185 / C2A).